Consider the following 868-residue polypeptide: Coatomer subunit gamma (868 aa).

Over residues 1–11 (MWRTKRGRTRR) the composition is skewed to basic residues. The tract at residues 1 to 22 (MWRTKRGRTRRRDAGGNPWQNL) is disordered. 4 HEAT repeats span residues 64 to 101 (REATECFFAMTKLFQSKDVVMRRMVYLGIKELSPIADD), 287 to 324 (RELSTAVSILQLFCGSSKATLRFAAVRTMNKVAMLHPP), 326 to 359 (VNVCNLDLEGLIADSNRSVATLAITTLLKTGAES), and 360 to 396 (SVERLMKQIATFVAEISDEFKLVVVQAIRSLCTKFPR).

Belongs to the COPG family. As to quaternary structure, oligomeric complex that consists of at least the alpha, beta, beta', gamma, delta, epsilon and zeta subunits.

The protein localises to the cytoplasm. The protein resides in the golgi apparatus membrane. It localises to the cytoplasmic vesicle. It is found in the COPI-coated vesicle membrane. Its subcellular location is the endoplasmic reticulum. Functionally, the coatomer is a cytosolic protein complex that binds to dilysine motifs and reversibly associates with Golgi non-clathrin-coated vesicles, which further mediate biosynthetic protein transport from the ER, via the Golgi up to the trans Golgi network. Coatomer complex is required for budding from Golgi membranes, and is essential for the retrograde Golgi-to-ER transport of dilysine-tagged proteins. This Anopheles gambiae (African malaria mosquito) protein is Coatomer subunit gamma.